A 346-amino-acid polypeptide reads, in one-letter code: tRNA N6-adenosine threonylcarbamoyltransferase (346 aa).

Residues His111 and His115 each coordinate Fe cation. Substrate is bound by residues 134–138, Asp167, Gly180, and Asn279; that span reads LVSGG. Asp307 is a binding site for Fe cation.

The protein belongs to the KAE1 / TsaD family. Requires Fe(2+) as cofactor.

The protein localises to the cytoplasm. It catalyses the reaction L-threonylcarbamoyladenylate + adenosine(37) in tRNA = N(6)-L-threonylcarbamoyladenosine(37) in tRNA + AMP + H(+). Required for the formation of a threonylcarbamoyl group on adenosine at position 37 (t(6)A37) in tRNAs that read codons beginning with adenine. Is involved in the transfer of the threonylcarbamoyl moiety of threonylcarbamoyl-AMP (TC-AMP) to the N6 group of A37, together with TsaE and TsaB. TsaD likely plays a direct catalytic role in this reaction. The chain is tRNA N6-adenosine threonylcarbamoyltransferase from Burkholderia pseudomallei (strain K96243).